The following is a 257-amino-acid chain: uncharacterized protein (257 aa).

An N-terminal signal peptide occupies residues 1–22; it reads MIHSKRLKMCLCLIILSVFIGA. Cys23 carries N-palmitoyl cysteine lipidation. Cys23 carries the S-diacylglycerol cysteine lipid modification.

This sequence belongs to the staphylococcal tandem lipoprotein family.

Its subcellular location is the cell membrane. This is an uncharacterized protein from Staphylococcus aureus (strain MRSA252).